The following is a 130-amino-acid chain: Riboflavin kinase (130 aa).

A CDP-binding site is contributed by 12-17 (GLGVGA). 2 residues coordinate Mg(2+): T39 and N41. Residues T90 and E98 each coordinate FMN. A CDP-binding site is contributed by 103-106 (KNLR).

Belongs to the archaeal riboflavin kinase family. Requires Mg(2+) as cofactor.

The catalysed reaction is riboflavin + CTP = CDP + FMN + H(+). The protein operates within cofactor biosynthesis; FMN biosynthesis; FMN from riboflavin (CTP route): step 1/1. Catalyzes the CTP-dependent phosphorylation of riboflavin (vitamin B2) to form flavin mononucleotide (FMN). This chain is Riboflavin kinase, found in Staphylothermus marinus (strain ATCC 43588 / DSM 3639 / JCM 9404 / F1).